The sequence spans 170 residues: UPF0251 protein MA_1017 (170 aa).

Belongs to the UPF0251 family.

In Methanosarcina acetivorans (strain ATCC 35395 / DSM 2834 / JCM 12185 / C2A), this protein is UPF0251 protein MA_1017.